The chain runs to 489 residues: ATP-dependent zinc metalloprotease FtsH 3 (489 aa).

At 1-14 (MNPRPVRPGGSLQQ) the chain is on the cytoplasmic side. The helical transmembrane segment at 15 to 31 (SLLALGSLSVAVGLAVW) threads the bilayer. Residues 32–489 (QQRTLGRGRS…GPRPARPAMN (458 aa)) are Extracellular-facing. 95-102 (GPPGTGKT) serves as a coordination point for ATP. Residue H315 participates in Zn(2+) binding. E316 is a catalytic residue. 2 residues coordinate Zn(2+): H319 and D391.

In the central section; belongs to the AAA ATPase family. It in the C-terminal section; belongs to the peptidase M41 family. In terms of assembly, homohexamer. Zn(2+) is required as a cofactor.

It localises to the cell membrane. In terms of biological role, acts as a processive, ATP-dependent zinc metallopeptidase for both cytoplasmic and membrane proteins. Plays a role in the quality control of integral membrane proteins. The sequence is that of ATP-dependent zinc metalloprotease FtsH 3 from Sphaerobacter thermophilus (strain ATCC 49802 / DSM 20745 / KCCM 41009 / NCIMB 13125 / S 6022).